The sequence spans 306 residues: D-alanine--D-alanine ligase B (306 aa).

Catalysis depends on residues glutamate 15 and serine 150. One can recognise an ATP-grasp domain in the interval 101-303 (KLLWQGAGLP…FSQLVVRILE (203 aa)). An ATP-binding site is contributed by 134-189 (ISSLGLPVIVKPSREGSSVGMSKVVAENALQDALRLAFQHDEEVLIEKWLSGPEFT). Residues aspartate 257, glutamate 270, and asparagine 272 each coordinate Mg(2+). Serine 281 is a catalytic residue.

This sequence belongs to the D-alanine--D-alanine ligase family. In terms of assembly, monomer. Requires Mg(2+) as cofactor. The cofactor is Mn(2+).

The protein resides in the cytoplasm. The catalysed reaction is 2 D-alanine + ATP = D-alanyl-D-alanine + ADP + phosphate + H(+). The protein operates within cell wall biogenesis; peptidoglycan biosynthesis. Its function is as follows. Cell wall formation. This chain is D-alanine--D-alanine ligase B, found in Escherichia coli O6:H1 (strain CFT073 / ATCC 700928 / UPEC).